A 181-amino-acid polypeptide reads, in one-letter code: MLKTVLVSFINLICALSYADQTTQNPNLTSVASNVDVASNQSDDLLPAEAAVHFVQPWARPTINVQGKVSNSAMYFTLINTRNKSYQLVNISSDKIGGIEIHQTINDQGVNKMVKVDYPFLISGNINVDFKPGSRHIMLYDPKVDLNAGDEFQITFFFDDNTQKIVNVKVANDNPYNKIGN.

This is an uncharacterized protein from Rickettsia prowazekii (strain Madrid E).